The following is a 418-amino-acid chain: Putative competence-damage inducible protein (418 aa).

It belongs to the CinA family.

The protein is Putative competence-damage inducible protein of Streptococcus pneumoniae serotype 19F (strain G54).